Consider the following 499-residue polypeptide: Chaperone SurA (499 aa).

The N-terminal stretch at 1-36 is a signal peptide; the sequence is MKRQEFALFSLTLMLSPWRRVLLPAVLAAMAGPALA. PpiC domains lie at 231–333 and 352–450; these read PTEF…KLTA and ITQT…QVEN.

The protein localises to the periplasm. It carries out the reaction [protein]-peptidylproline (omega=180) = [protein]-peptidylproline (omega=0). Chaperone involved in the correct folding and assembly of outer membrane proteins. Recognizes specific patterns of aromatic residues and the orientation of their side chains, which are found more frequently in integral outer membrane proteins. May act in both early periplasmic and late outer membrane-associated steps of protein maturation. This is Chaperone SurA from Cupriavidus pinatubonensis (strain JMP 134 / LMG 1197) (Cupriavidus necator (strain JMP 134)).